The primary structure comprises 960 residues: Angiomotin-like protein 1 (960 aa).

The tract at residues serine 196–lysine 248 is disordered. 3 positions are modified to phosphoserine: serine 243, serine 271, and serine 297. The stretch at arginine 261–leucine 281 forms a coiled coil. 3 disordered regions span residues alanine 277–phenylalanine 317, leucine 381–valine 407, and proline 413–leucine 432. The segment covering glutamine 388 to serine 401 has biased composition (low complexity). Coiled coils occupy residues valine 440–arginine 641 and alanine 667–serine 697. Residue serine 722 is modified to Phosphoserine. Residues serine 731–histidine 761 are a coiled coil. The interval glutamine 775–threonine 826 is disordered. Phosphoserine is present on residues serine 795, serine 807, and serine 830. Positions glycine 804–leucine 817 are enriched in polar residues. Residues asparagine 842–aspartate 952 are disordered. Residues alanine 845–alanine 870 are compositionally biased toward low complexity. Residues proline 898–proline 911 are compositionally biased toward polar residues. Position 904 is a phosphoserine (serine 904). Threonine 906 bears the Phosphothreonine mark. Serine 910 is modified (phosphoserine). The short motif at glutamate 957–isoleucine 960 is the PDZ-binding element.

It belongs to the angiomotin family. In terms of processing, polyubiquitinated by NEDD4, leading to proteasomal degradation.

It is found in the cell junction. The protein resides in the tight junction. Its function is as follows. Inhibits the Wnt/beta-catenin signaling pathway, probably by recruiting CTNNB1 to recycling endosomes and hence preventing its translocation to the nucleus. This Bos taurus (Bovine) protein is Angiomotin-like protein 1 (AMOTL1).